The primary structure comprises 239 residues: NAD-dependent protein deacylase (239 aa).

One can recognise a Deacetylase sirtuin-type domain in the interval methionine 1–methionine 239. Glycine 8 to tryptophan 27 lines the NAD(+) pocket. Substrate contacts are provided by tyrosine 52 and arginine 55. Glutamine 93–aspartate 96 contributes to the NAD(+) binding site. Histidine 111 functions as the Proton acceptor in the catalytic mechanism. NAD(+) contacts are provided by residues glycine 182 to serine 184, asparagine 207 to aspartate 209, and alanine 225.

Belongs to the sirtuin family. Class III subfamily.

Its subcellular location is the cytoplasm. It carries out the reaction N(6)-acetyl-L-lysyl-[protein] + NAD(+) + H2O = 2''-O-acetyl-ADP-D-ribose + nicotinamide + L-lysyl-[protein]. The enzyme catalyses N(6)-succinyl-L-lysyl-[protein] + NAD(+) + H2O = 2''-O-succinyl-ADP-D-ribose + nicotinamide + L-lysyl-[protein]. Its function is as follows. NAD-dependent lysine deacetylase and desuccinylase that specifically removes acetyl and succinyl groups on target proteins. Modulates the activities of several proteins which are inactive in their acylated form. This Rhodopirellula baltica (strain DSM 10527 / NCIMB 13988 / SH1) protein is NAD-dependent protein deacylase.